The primary structure comprises 135 residues: Large ribosomal subunit protein uL16c (135 aa).

The protein belongs to the universal ribosomal protein uL16 family. In terms of assembly, part of the 50S ribosomal subunit.

Its subcellular location is the plastid. The protein localises to the chloroplast. The sequence is that of Large ribosomal subunit protein uL16c from Cucumis sativus (Cucumber).